Here is a 264-residue protein sequence, read N- to C-terminus: 3-methyl-2-oxobutanoate hydroxymethyltransferase (264 aa).

Residues Asp-45 and Asp-84 each contribute to the Mg(2+) site. 3-methyl-2-oxobutanoate is bound by residues 45–46, Asp-84, and Lys-112; that span reads DS. Glu-114 provides a ligand contact to Mg(2+). The active-site Proton acceptor is Glu-181.

It belongs to the PanB family. In terms of assembly, homodecamer; pentamer of dimers. Mg(2+) serves as cofactor.

It is found in the cytoplasm. It catalyses the reaction 3-methyl-2-oxobutanoate + (6R)-5,10-methylene-5,6,7,8-tetrahydrofolate + H2O = 2-dehydropantoate + (6S)-5,6,7,8-tetrahydrofolate. It functions in the pathway cofactor biosynthesis; (R)-pantothenate biosynthesis; (R)-pantoate from 3-methyl-2-oxobutanoate: step 1/2. In terms of biological role, catalyzes the reversible reaction in which hydroxymethyl group from 5,10-methylenetetrahydrofolate is transferred onto alpha-ketoisovalerate to form ketopantoate. The chain is 3-methyl-2-oxobutanoate hydroxymethyltransferase from Shewanella halifaxensis (strain HAW-EB4).